Here is a 348-residue protein sequence, read N- to C-terminus: F-box protein At2g20380 (348 aa).

The F-box domain maps to 14–60 (SPESNSLPNDLIVTILARLSQSYYPKLSLVSKTFRAILASPELYQTR).

The protein is F-box protein At2g20380 of Arabidopsis thaliana (Mouse-ear cress).